The chain runs to 231 residues: Uroporphyrinogen-III C-methyltransferase (231 aa).

S-adenosyl-L-homocysteine contacts are provided by residues Pro10, 85 to 87, 115 to 116, Met166, and Ala218; these read GGD and TS.

The protein belongs to the precorrin methyltransferase family. Homodimer.

The catalysed reaction is uroporphyrinogen III + 2 S-adenosyl-L-methionine = precorrin-2 + 2 S-adenosyl-L-homocysteine + H(+). It carries out the reaction uroporphyrinogen III + S-adenosyl-L-methionine = precorrin-1 + S-adenosyl-L-homocysteine + H(+). The enzyme catalyses precorrin-1 + S-adenosyl-L-methionine = precorrin-2 + S-adenosyl-L-homocysteine. It functions in the pathway cofactor biosynthesis; adenosylcobalamin biosynthesis; precorrin-2 from uroporphyrinogen III: step 1/1. Does not show substrate inhibition at uroporphyrinogen III concentrations of up to 20 uM, in contrast to SUMT from Sinorhizobium (previously believed to be P.denitrificans). Catalyzes the two successive C-2 and C-7 methylation reactions involved in the conversion of uroporphyrinogen III to precorrin-2 via the intermediate formation of precorrin-1. It is a step in the biosynthesis of both cobalamin (vitamin B12) and coenzyme F430. The polypeptide is Uroporphyrinogen-III C-methyltransferase (cobA) (Methanobacterium ivanovii).